The sequence spans 66 residues: Phylloseptin-S3 (66 aa).

The first 22 residues, 1–22, serve as a signal peptide directing secretion; the sequence is MAFLKKSLFLVLFLGLVSLSIC. The propeptide occupies 23–46; that stretch reads EEEKRETEEEEHDQEEDDKSEEKR. The segment at 25–44 is disordered; sequence EKRETEEEEHDQEEDDKSEE. Over residues 30–41 the composition is skewed to acidic residues; sequence EEEEHDQEEDDK. Phenylalanine 65 bears the Phenylalanine amide mark.

The protein belongs to the frog skin active peptide (FSAP) family. Phylloseptin subfamily. Expressed by the skin glands.

The protein resides in the secreted. Its subcellular location is the target cell membrane. Its function is as follows. Antimicrobial peptide with activity against the Gram-positive S.pyogenes (MIC=12.5 uM), but not against all other bacteria tested (both Gram-positive and Gram-negative). Does not show activity against fungi, and against Leishmania species. This Phyllomedusa sauvagei (Sauvage's leaf frog) protein is Phylloseptin-S3.